Here is a 184-residue protein sequence, read N- to C-terminus: ATP synthase subunit b, chloroplastic (184 aa).

Residues 27 to 49 traverse the membrane as a helical segment; sequence LATNPINLSVVLGVLIFFGKGVL.

It belongs to the ATPase B chain family. As to quaternary structure, F-type ATPases have 2 components, F(1) - the catalytic core - and F(0) - the membrane proton channel. F(1) has five subunits: alpha(3), beta(3), gamma(1), delta(1), epsilon(1). F(0) has four main subunits: a(1), b(1), b'(1) and c(10-14). The alpha and beta chains form an alternating ring which encloses part of the gamma chain. F(1) is attached to F(0) by a central stalk formed by the gamma and epsilon chains, while a peripheral stalk is formed by the delta, b and b' chains.

It localises to the plastid. It is found in the chloroplast thylakoid membrane. In terms of biological role, f(1)F(0) ATP synthase produces ATP from ADP in the presence of a proton or sodium gradient. F-type ATPases consist of two structural domains, F(1) containing the extramembraneous catalytic core and F(0) containing the membrane proton channel, linked together by a central stalk and a peripheral stalk. During catalysis, ATP synthesis in the catalytic domain of F(1) is coupled via a rotary mechanism of the central stalk subunits to proton translocation. Component of the F(0) channel, it forms part of the peripheral stalk, linking F(1) to F(0). In Atropa belladonna (Belladonna), this protein is ATP synthase subunit b, chloroplastic.